Consider the following 375-residue polypeptide: E3 ubiquitin-protein ligase RHF2A (375 aa).

Residues 33–74 (CSICLESFCESDPSTLTSCKHEYHLQCILEWCQRSSQCPMCW) form an RING-type; atypical zinc finger. Basic residues predominate over residues 146 to 159 (RARHGVRREGHRSR). 3 disordered regions span residues 146 to 165 (RARHGVRREGHRSRSSSQGH), 172 to 262 (SSQP…SESL), and 318 to 375 (ERLE…SGSS). A compositionally biased stretch (pro residues) spans 178-188 (SSPPPHPPMPS). Polar residues-rich tracts occupy residues 211–245 (SHQSNTQPPTSSHPRQVSPSASDSNSRPLNQSSPS) and 327–336 (RPSTASVSDV). The span at 337-365 (SENHTPETNNEHNRAAAGDEHSVNERGVK) shows a compositional bias: basic and acidic residues.

It catalyses the reaction S-ubiquitinyl-[E2 ubiquitin-conjugating enzyme]-L-cysteine + [acceptor protein]-L-lysine = [E2 ubiquitin-conjugating enzyme]-L-cysteine + N(6)-ubiquitinyl-[acceptor protein]-L-lysine.. Its pathway is protein modification; protein ubiquitination. In terms of biological role, E3 ubiquitin-protein ligase involved in the positive regulation of the gametogenesis progression. Required for the degradation of KRP6, a cyclin-dependent kinase inhibitor which accumulates during meiosis and blocks the progression of subsequent mitoses during gametophytes development. Functions in association with RHF1A. In Arabidopsis thaliana (Mouse-ear cress), this protein is E3 ubiquitin-protein ligase RHF2A.